The primary structure comprises 315 residues: Transaldolase (315 aa).

Catalysis depends on lysine 131, which acts as the Schiff-base intermediate with substrate.

It belongs to the transaldolase family. Type 1 subfamily. As to quaternary structure, homodimer.

Its subcellular location is the cytoplasm. The enzyme catalyses D-sedoheptulose 7-phosphate + D-glyceraldehyde 3-phosphate = D-erythrose 4-phosphate + beta-D-fructose 6-phosphate. Its pathway is carbohydrate degradation; pentose phosphate pathway; D-glyceraldehyde 3-phosphate and beta-D-fructose 6-phosphate from D-ribose 5-phosphate and D-xylulose 5-phosphate (non-oxidative stage): step 2/3. Its function is as follows. Transaldolase is important for the balance of metabolites in the pentose-phosphate pathway. This Haemophilus ducreyi (strain 35000HP / ATCC 700724) protein is Transaldolase.